Here is a 369-residue protein sequence, read N- to C-terminus: Protein RecA (369 aa).

Over residues 1 to 10 (MARTTDDSKK) the composition is skewed to basic and acidic residues. The disordered stretch occupies residues 1–20 (MARTTDDSKKAAPAAGTADE). 82–89 (GPESSGKT) provides a ligand contact to ATP. A disordered region spans residues 350–369 (PAAAVAAPDEGDDDLGDEEV). Over residues 358–369 (DEGDDDLGDEEV) the composition is skewed to acidic residues.

Belongs to the RecA family.

Its subcellular location is the cytoplasm. In terms of biological role, can catalyze the hydrolysis of ATP in the presence of single-stranded DNA, the ATP-dependent uptake of single-stranded DNA by duplex DNA, and the ATP-dependent hybridization of homologous single-stranded DNAs. It interacts with LexA causing its activation and leading to its autocatalytic cleavage. The polypeptide is Protein RecA (Gloeobacter violaceus (strain ATCC 29082 / PCC 7421)).